A 301-amino-acid polypeptide reads, in one-letter code: Putative S-adenosyl-L-methionine-dependent methyltransferase MMAR_4850 (301 aa).

S-adenosyl-L-methionine is bound by residues Asp-127 and 156 to 157 (DL).

Belongs to the UPF0677 family.

Its function is as follows. Exhibits S-adenosyl-L-methionine-dependent methyltransferase activity. The polypeptide is Putative S-adenosyl-L-methionine-dependent methyltransferase MMAR_4850 (Mycobacterium marinum (strain ATCC BAA-535 / M)).